Consider the following 362-residue polypeptide: Putative F-box protein At3g23260 (362 aa).

The 46-residue stretch at 1 to 46 (MEWRSLPVELQEEILSRVPAKYLARLRSTSKQWNALSKTGSFAKKH) folds into the F-box domain.

The chain is Putative F-box protein At3g23260 from Arabidopsis thaliana (Mouse-ear cress).